The following is a 258-amino-acid chain: Tryptophan synthase alpha chain (258 aa).

Residues E47 and D58 each act as proton acceptor in the active site.

The protein belongs to the TrpA family. As to quaternary structure, tetramer of two alpha and two beta chains.

It carries out the reaction (1S,2R)-1-C-(indol-3-yl)glycerol 3-phosphate + L-serine = D-glyceraldehyde 3-phosphate + L-tryptophan + H2O. It functions in the pathway amino-acid biosynthesis; L-tryptophan biosynthesis; L-tryptophan from chorismate: step 5/5. Its function is as follows. The alpha subunit is responsible for the aldol cleavage of indoleglycerol phosphate to indole and glyceraldehyde 3-phosphate. This chain is Tryptophan synthase alpha chain, found in Bacillus thuringiensis subsp. konkukian (strain 97-27).